The chain runs to 207 residues: Dephospho-CoA kinase (207 aa).

Over residues 1 to 11 the composition is skewed to polar residues; sequence MTRSPAPSSPT. Residues 1-21 form a disordered region; that stretch reads MTRSPAPSSPTHPRRLGLTGS. Residues 15-207 enclose the DPCK domain; sequence RLGLTGSIGA…DAALRQLEIT (193 aa). 23–28 contacts ATP; that stretch reads GAGKST.

This sequence belongs to the CoaE family.

It is found in the cytoplasm. It catalyses the reaction 3'-dephospho-CoA + ATP = ADP + CoA + H(+). It functions in the pathway cofactor biosynthesis; coenzyme A biosynthesis; CoA from (R)-pantothenate: step 5/5. In terms of biological role, catalyzes the phosphorylation of the 3'-hydroxyl group of dephosphocoenzyme A to form coenzyme A. The polypeptide is Dephospho-CoA kinase (Deinococcus radiodurans (strain ATCC 13939 / DSM 20539 / JCM 16871 / CCUG 27074 / LMG 4051 / NBRC 15346 / NCIMB 9279 / VKM B-1422 / R1)).